A 446-amino-acid chain; its full sequence is Cyclin-F2-2 (446 aa).

The interval 191–216 (YNGDNDAPAPDNSTASRPQLCAPYDD) is disordered.

This sequence belongs to the cyclin family. Cyclin F subfamily.

The protein is Cyclin-F2-2 (CYCF2-2) of Oryza sativa subsp. japonica (Rice).